A 185-amino-acid polypeptide reads, in one-letter code: Probable gluconokinase (185 aa).

11-18 (GVSGSGKS) is an ATP binding site.

This sequence belongs to the gluconokinase GntK/GntV family.

The enzyme catalyses D-gluconate + ATP = 6-phospho-D-gluconate + ADP + H(+). Its pathway is carbohydrate acid metabolism; D-gluconate degradation. The polypeptide is Probable gluconokinase (Idnk) (Rattus norvegicus (Rat)).